The following is a 661-amino-acid chain: Phospholipid:diacylglycerol acyltransferase (661 aa).

The tract at residues 1–71 is disordered; it reads MGTLFRRNVQ…FDRKRDGNGR (71 aa). Residues 1–80 lie on the Cytoplasmic side of the membrane; that stretch reads MGTLFRRNVQ…RKRWRDSRRL (80 aa). The span at 34–48 shows a compositional bias: basic residues; sequence HIHHQQGLGHKRRRG. 2 short sequence motifs (bipartite nuclear localization signal) span residues 43-50 and 64-71; these read HKRRRGIS and RKRDGNGR. The span at 54-70 shows a compositional bias: basic and acidic residues; it reads KRNERGKDFDRKRDGNG. The chain crosses the membrane as a helical span at residues 81–101; it reads IFILGAFLGVLLPFSFGAYHV. The Lumenal portion of the chain corresponds to 102–661; that stretch reads HNSDSDLFDN…QWVSQMPFPM (560 aa). Residue Gln-162 coordinates substrate. The GHSXG lipase motif signature appears at 322 to 326; it reads GHSMG. Ser-324 (acyl-ester intermediate) is an active-site residue. Met-325 contacts substrate. N-linked (GlcNAc...) asparagine glycans are attached at residues Asn-453, Asn-461, and Asn-469. The active-site Charge relay system is Asp-567. Asn-594 is a glycosylation site (N-linked (GlcNAc...) asparagine). His-618 serves as the catalytic Charge relay system.

It belongs to the AB hydrolase superfamily. Lipase family.

Its subcellular location is the endoplasmic reticulum membrane. It localises to the nucleus inner membrane. It carries out the reaction a glycerophospholipid + a 1,2-diacyl-sn-glycerol = a monoacylglycerophospholipid + a triacyl-sn-glycerol. The enzyme catalyses a 1-acyl-sn-glycerol + a 1,2-diacyl-sn-glycero-3-phosphocholine = a 1-acyl-sn-glycero-3-phosphocholine + a 1,2-diacyl-sn-glycerol. It catalyses the reaction 1,2-di-(9Z-octadecenoyl)-sn-glycero-3-phosphoethanolamine + 1,2-di-(9Z-octadecenoyl)-sn-glycerol = 1-(9Z-octadecenoyl)-sn-glycero-3-phosphoethanolamine + 1,2,3-tri-(9Z-octadecenoyl)-glycerol. The catalysed reaction is 1,2-di-(9Z-octadecenoyl)-sn-glycerol + 1,2-di-(9Z-octadecenoyl)-sn-glycero-3-phosphocholine = 1,2,3-tri-(9Z-octadecenoyl)-glycerol + 1-(9Z-octadecenoyl)-sn-glycero-3-phosphocholine. It carries out the reaction 1-(9Z-octadecenoyl)-sn-glycerol + 1,2-di-(9Z-octadecenoyl)-sn-glycero-3-phosphocholine = di-(9Z)-octadecenoylglycerol + 1-(9Z-octadecenoyl)-sn-glycero-3-phosphocholine. The enzyme catalyses 2-(9Z-octadecenoyl)-glycerol + 1,2-di-(9Z-octadecenoyl)-sn-glycero-3-phosphocholine = 1,2-di-(9Z-octadecenoyl)-glycerol + 1-(9Z-octadecenoyl)-sn-glycero-3-phosphocholine. It catalyses the reaction 1-(9Z-octadecenoyl)-2-hexadecanoyl-sn-glycero-3-phosphoethanolamine + 1,2-di-(9Z-octadecenoyl)-sn-glycerol = 1,2-di-(9Z)-octadecenoyl-3-hexadecanoyl-sn-glycerol + 1-(9Z-octadecenoyl)-sn-glycero-3-phosphoethanolamine. The catalysed reaction is 1-(9Z-octadecenoyl)-2-octadecanoyl-sn-glycero-3-phosphoethanolamine + 1,2-di-(9Z-octadecenoyl)-sn-glycerol = 1,2-di-(9Z)-octadecenoyl-3-octadecanoyl-sn-glycerol + 1-(9Z-octadecenoyl)-sn-glycero-3-phosphoethanolamine. It carries out the reaction 1-(9Z)-octadecenoyl-2-(9Z,12Z)-octadecadienoyl-sn-glycero-3-phosphoethanolamine + 1,2-di-(9Z-octadecenoyl)-sn-glycerol = 1,2-di-(9Z)-octadecenoyl-3-(9Z,12Z)-octadecadienoyl-sn-glycerol + 1-(9Z-octadecenoyl)-sn-glycero-3-phosphoethanolamine. Its function is as follows. Catalyzes triacylglycerol (TAG) formation by an acyl-CoA independent pathway. The enzyme specifically transfers acyl groups from the sn-2 position of a phospholipid to diacylglycerol (DAG), thus forming an sn-1-lysophospholipid. The preferred acyl donors are phosphatidylethanolamine (PE) and phosphatidylcholine (PC). Also capable of using broad acyl donors such as phosphatidic acid (PA), phosphatidylserine (PS), phosphatidylglycerol (PG) and phosphatidylinositol (PI), as well as monogalactosyldiacylglycerol (MGDG), digalactosyldiacylglycerol (DGDG), and acyl-CoA, and it is more likely to use unsaturated acyl donors. As acyl acceptors, it prefers 1,2- over 1,3-diacylglycerol (DAG). Additionally, has esterification activity that can utilize methanol as acyl acceptor to generate fatty acid methyl esters (FAME). Can also utilize ceramide instead of DAG, acylating the ceramides by attaching a fatty acid to the hydroxy group on the first carbon atom of the long-chain base to produce 1-O-acylceramides. Involved in lipid particle synthesis from the endoplasmic reticulum, promoting localized TAG production at discrete ER subdomains. Relocates from the endoplasmic reticulum to a subdomain of the inner nuclear membrane upon nutrient starvation, where it provides a site of TAG synthesis, which is coupled with nuclear membrane remodeling. The protein is Phospholipid:diacylglycerol acyltransferase of Saccharomyces cerevisiae (strain ATCC 204508 / S288c) (Baker's yeast).